We begin with the raw amino-acid sequence, 477 residues long: Ribulose bisphosphate carboxylase large chain (477 aa).

A propeptide spanning residues 1–2 (MS) is cleaved from the precursor. At Pro3 the chain carries N-acetylproline. Lys14 bears the N6,N6,N6-trimethyllysine mark. Residue Thr173 coordinates substrate. Lys175 (proton acceptor) is an active-site residue. Lys177 is a substrate binding site. Mg(2+)-binding residues include Lys201, Asp203, and Glu204. An N6-carboxylysine modification is found at Lys201. His294 acts as the Proton acceptor in catalysis. Substrate-binding residues include Arg295, His327, and Ser379.

It belongs to the RuBisCO large chain family. Type I subfamily. Heterohexadecamer of 8 large chains and 8 small chains; disulfide-linked. The disulfide link is formed within the large subunit homodimers. Requires Mg(2+) as cofactor. The disulfide bond which can form in the large chain dimeric partners within the hexadecamer appears to be associated with oxidative stress and protein turnover.

The protein resides in the plastid. Its subcellular location is the chloroplast. The catalysed reaction is 2 (2R)-3-phosphoglycerate + 2 H(+) = D-ribulose 1,5-bisphosphate + CO2 + H2O. It carries out the reaction D-ribulose 1,5-bisphosphate + O2 = 2-phosphoglycolate + (2R)-3-phosphoglycerate + 2 H(+). Functionally, ruBisCO catalyzes two reactions: the carboxylation of D-ribulose 1,5-bisphosphate, the primary event in carbon dioxide fixation, as well as the oxidative fragmentation of the pentose substrate in the photorespiration process. Both reactions occur simultaneously and in competition at the same active site. This Gerbera jamesonii (Transvaal daisy) protein is Ribulose bisphosphate carboxylase large chain.